The following is a 176-amino-acid chain: ATP synthase subunit b (176 aa).

The helical transmembrane segment at 18 to 38 (FGLDATVWVSIAMLVFLGILV) threads the bilayer.

The protein belongs to the ATPase B chain family. F-type ATPases have 2 components, F(1) - the catalytic core - and F(0) - the membrane proton channel. F(1) has five subunits: alpha(3), beta(3), gamma(1), delta(1), epsilon(1). F(0) has three main subunits: a(1), b(2) and c(10-14). The alpha and beta chains form an alternating ring which encloses part of the gamma chain. F(1) is attached to F(0) by a central stalk formed by the gamma and epsilon chains, while a peripheral stalk is formed by the delta and b chains.

Its subcellular location is the cell inner membrane. F(1)F(0) ATP synthase produces ATP from ADP in the presence of a proton or sodium gradient. F-type ATPases consist of two structural domains, F(1) containing the extramembraneous catalytic core and F(0) containing the membrane proton channel, linked together by a central stalk and a peripheral stalk. During catalysis, ATP synthesis in the catalytic domain of F(1) is coupled via a rotary mechanism of the central stalk subunits to proton translocation. Its function is as follows. Component of the F(0) channel, it forms part of the peripheral stalk, linking F(1) to F(0). In Sphingopyxis alaskensis (strain DSM 13593 / LMG 18877 / RB2256) (Sphingomonas alaskensis), this protein is ATP synthase subunit b.